Consider the following 1271-residue polypeptide: Breakpoint cluster region protein (1271 aa).

Position 1 is an N-acetylmethionine (Met-1). Residues 1–426 (MVDPVGFAEA…DGEGAFHGDA (426 aa)) form a kinase region. Positions 28 to 55 (VGDIEQELERCKASIRRLEQEVNQERFR) form a coiled coil. The interval 67–173 (KKSYDRQRWG…GHGQPGADAE (107 aa)) is disordered. Low complexity predominate over residues 87 to 105 (ASEPRASASRPQPAPADGA). Ser-122 bears the Phosphoserine mark. Residues 123–138 (PGKARPGTARRPGAAA) show a composition bias toward low complexity. At Ser-139 the chain carries Phosphoserine. At Tyr-177 the chain carries Phosphotyrosine; by HCK. Positions 185-198 (ERGLVKVNDKEVSD) are enriched in basic and acidic residues. Disordered stretches follow at residues 185-247 (ERGL…GDYE), 286-392 (GMME…HKRH), and 416-476 (NDGE…SRDA). Residues 197 to 385 (SDRISSLGSQ…QSFDSSSPPT (189 aa)) form a binding to ABL SH2-domain region. Polar residues predominate over residues 199 to 208 (RISSLGSQAM). Residues Ser-202, Ser-215, Ser-222, and Ser-236 each carry the phosphoserine modification. Tyr-246 is subject to Phosphotyrosine; by FES. Composition is skewed to low complexity over residues 346 to 356 (SSGQSSRVSPS) and 369 to 382 (SPSQ…DSSS). Ser-356, Ser-377, and Ser-382 each carry phosphoserine. A Phosphothreonine modification is found at Thr-385. Residues 441-451 (DRAEEQRRHQD) show a composition bias toward basic and acidic residues. Phosphoserine is present on residues Ser-459 and Ser-463. Arg-471 carries the omega-N-methylarginine modification. Phosphoserine is present on residues Ser-473 and Ser-488. Residues 498–691 (MRKWVLSGIL…QNFLSSINEE (194 aa)) enclose the DH domain. Tyr-554 carries the phosphotyrosine modification. A Phosphothreonine modification is found at Thr-641. Residue Tyr-644 is modified to Phosphotyrosine. Thr-693 carries the post-translational modification Phosphothreonine. Residues 708-866 (QLLKDSFMVE…WRENIREQQK (159 aa)) enclose the PH domain. The C2 domain occupies 893–1020 (HSIPLTINKE…QDRDWQRTVI (128 aa)). A Phosphoserine modification is found at Ser-894. The Rho-GAP domain occupies 1054-1248 (VKIAVVTKRE…VMSQVQVLLY (195 aa)). Ser-1264 is modified (phosphoserine).

As to quaternary structure, homotetramer. Interacts with PDZK1. May interact with CCPG1. Interacts with FES/FPS, ABL1, PIK3R1 and GRB2. Interacts with HCK. Interacts with SH2D5. Interacts with DLG4. In terms of processing, autophosphorylated. Phosphorylated by FES/FPS on tyrosine residues, leading to down-regulation of the BCR kinase activity. Phosphorylation at Tyr-177 by HCK is important for interaction with GRB2.

It is found in the postsynaptic density. It localises to the cell projection. The protein resides in the dendritic spine. The protein localises to the axon. Its subcellular location is the synapse. The enzyme catalyses L-seryl-[protein] + ATP = O-phospho-L-seryl-[protein] + ADP + H(+). It catalyses the reaction L-threonyl-[protein] + ATP = O-phospho-L-threonyl-[protein] + ADP + H(+). Protein with a unique structure having two opposing regulatory activities toward small GTP-binding proteins. The C-terminus is a GTPase-activating protein (GAP) domain which stimulates GTP hydrolysis by RAC1, RAC2 and CDC42. Accelerates the intrinsic rate of GTP hydrolysis of RAC1 or CDC42, leading to down-regulation of the active GTP-bound form. The central Dbl homology (DH) domain functions as guanine nucleotide exchange factor (GEF) that modulates the GTPases CDC42, RHOA and RAC1. Promotes the conversion of CDC42, RHOA and RAC1 from the GDP-bound to the GTP-bound form. The amino terminus contains an intrinsic kinase activity. Functions as an important negative regulator of neuronal RAC1 activity. Regulates macrophage functions such as CSF1-directed motility and phagocytosis through the modulation of RAC1 activity. Plays a major role as a RHOA GEF in keratinocytes being involved in focal adhesion formation and keratinocyte differentiation. The polypeptide is Breakpoint cluster region protein (Homo sapiens (Human)).